The sequence spans 190 residues: Cypemycin cysteine dehydrogenase (decarboxylating) (190 aa).

Belongs to the HFCD (homooligomeric flavin containing Cys decarboxylase) superfamily.

It catalyses the reaction [cypemycin](1-18)-L-Cys-L-Leu-L-Val-L-Cys + A = C(3,19),S(21)-[cypemycin](1-18)-L-Ala-L-Leu-N-thioethenyl-L-valinamide + hydrogen sulfide + AH2 + CO2. Its function is as follows. Involved in the biosynthesis of the lanaridin cypemycin. The polypeptide is Cypemycin cysteine dehydrogenase (decarboxylating) (Streptomyces sp).